Consider the following 475-residue polypeptide: Lipoprotein lipase (475 aa).

Residues 1–27 (MESKALLVLTLAVWLQSLTASRGGVAA) form the signal peptide. Residues 32-53 (RDFIDIESKFALRTPEDTAEDT) are interaction with GPIHBP1. A disulfide bridge connects residues Cys-54 and Cys-67. Asn-70 carries N-linked (GlcNAc...) asparagine glycosylation. 3'-nitrotyrosine is present on Tyr-121. Ser-159 serves as the catalytic Nucleophile. Catalysis depends on Asp-183, which acts as the Charge relay system. Residue Tyr-191 is modified to 3'-nitrotyrosine. Positions 194, 197, 199, and 202 each coordinate Ca(2+). A disulfide bridge connects residues Cys-243 and Cys-266. Residues 243 to 266 (CNIGEAIRVIAERGLGDVDQLVKC) form an essential for determining substrate specificity region. The active-site Charge relay system is His-268. 2 disulfides stabilise this stretch: Cys-291–Cys-310 and Cys-302–Cys-305. In terms of domain architecture, PLAT spans 341–464 (FHYQVKIHFS…KGKAPAVFVK (124 aa)). Tyr-343 bears the 3'-nitrotyrosine mark. A glycan (N-linked (GlcNAc...) asparagine) is linked at Asn-386. An important for interaction with lipoprotein particles region spans residues 417–421 (WSDWW). Residues 430 to 434 (KIRVK) form an important for heparin binding region. The interval 443–467 (IFCSREKVSHLQKGKAPAVFVKCHD) is interaction with GPIHBP1. Cys-445 and Cys-465 are joined by a disulfide.

This sequence belongs to the AB hydrolase superfamily. Lipase family. Homodimer. Interacts with GPIHBP1 with 1:1 stoichiometry. Interacts with APOC2; the interaction activates LPL activity in the presence of lipids. Interaction with heparan sulfate proteoglycans is required to protect LPL against loss of activity. Associates with lipoprotein particles in blood plasma. Interacts with LMF1 and SEL1L; interaction with SEL1L is required to prevent aggregation of newly synthesized LPL in the endoplasmic reticulum (ER), and for normal export of LPL from the ER to the extracellular space. Interacts with SORL1; SORL1 acts as a sorting receptor, promoting LPL localization to endosomes and later to lysosomes, leading to degradation of newly synthesized LPL. Tyrosine nitration after lipopolysaccharide (LPS) challenge down-regulates the lipase activity. In terms of tissue distribution, detected in blood plasma. Detected in milk (at protein level).

Its subcellular location is the cell membrane. The protein resides in the secreted. The protein localises to the extracellular space. It is found in the extracellular matrix. It carries out the reaction a triacylglycerol + H2O = a diacylglycerol + a fatty acid + H(+). The enzyme catalyses a 1,2-diacyl-sn-glycero-3-phosphocholine + H2O = a 2-acyl-sn-glycero-3-phosphocholine + a fatty acid + H(+). The catalysed reaction is 1,2,3-tri-(9Z-octadecenoyl)-glycerol + H2O = di-(9Z)-octadecenoylglycerol + (9Z)-octadecenoate + H(+). It catalyses the reaction 1,2-di-(9Z-octadecenoyl)-sn-glycero-3-phosphocholine + H2O = (9Z-octadecenoyl)-sn-glycero-3-phosphocholine + (9Z)-octadecenoate + H(+). It carries out the reaction 1,2,3-tributanoylglycerol + H2O = dibutanoylglycerol + butanoate + H(+). The enzyme catalyses 1,2-dihexadecanoyl-sn-glycero-3-phosphocholine + H2O = hexadecanoyl-sn-glycero-3-phosphocholine + hexadecanoate + H(+). The apolipoprotein APOC2 acts as a coactivator of LPL activity. Ca(2+) binding promotes protein stability and formation of the active homodimer. Interaction with GPIHBP1 protects LPL against inactivation by ANGPTL4. Inhibited by NaCl. Functionally, key enzyme in triglyceride metabolism. Catalyzes the hydrolysis of triglycerides from circulating chylomicrons and very low density lipoproteins (VLDL), and thereby plays an important role in lipid clearance from the blood stream, lipid utilization and storage. Although it has both phospholipase and triglyceride lipase activities it is primarily a triglyceride lipase with low but detectable phospholipase activity. Mediates margination of triglyceride-rich lipoprotein particles in capillaries. Recruited to its site of action on the luminal surface of vascular endothelium by binding to GPIHBP1 and cell surface heparan sulfate proteoglycans. In Homo sapiens (Human), this protein is Lipoprotein lipase (LPL).